A 274-amino-acid chain; its full sequence is 2,3,4,5-tetrahydropyridine-2,6-dicarboxylate N-succinyltransferase (274 aa).

Residues Arg-104 and Asp-141 each contribute to the substrate site.

This sequence belongs to the transferase hexapeptide repeat family. As to quaternary structure, homotrimer.

The protein localises to the cytoplasm. It carries out the reaction (S)-2,3,4,5-tetrahydrodipicolinate + succinyl-CoA + H2O = (S)-2-succinylamino-6-oxoheptanedioate + CoA. The protein operates within amino-acid biosynthesis; L-lysine biosynthesis via DAP pathway; LL-2,6-diaminopimelate from (S)-tetrahydrodipicolinate (succinylase route): step 1/3. This Buchnera aphidicola subsp. Acyrthosiphon pisum (strain APS) (Acyrthosiphon pisum symbiotic bacterium) protein is 2,3,4,5-tetrahydropyridine-2,6-dicarboxylate N-succinyltransferase.